Reading from the N-terminus, the 456-residue chain is E3 ubiquitin-protein ligase PUB24 (456 aa).

A U-box domain is found at 9–83 (EIPNYFICPI…QHWCVENETR (75 aa)).

Post-translationally, auto-ubiquitinated.

It carries out the reaction S-ubiquitinyl-[E2 ubiquitin-conjugating enzyme]-L-cysteine + [acceptor protein]-L-lysine = [E2 ubiquitin-conjugating enzyme]-L-cysteine + N(6)-ubiquitinyl-[acceptor protein]-L-lysine.. Its pathway is protein modification; protein ubiquitination. Functionally, E3 ubiquitin-protein ligase that acts as a negative regulator of the immunity triggered by the pathogen-associated molecular patterns (PAMPs), in association with PUB22 and PUB23. The polypeptide is E3 ubiquitin-protein ligase PUB24 (PUB24) (Arabidopsis thaliana (Mouse-ear cress)).